The primary structure comprises 964 residues: Glycine dehydrogenase (decarboxylating) (964 aa).

The residue at position 711 (K711) is an N6-(pyridoxal phosphate)lysine.

It belongs to the GcvP family. As to quaternary structure, the glycine cleavage system is composed of four proteins: P, T, L and H. Pyridoxal 5'-phosphate serves as cofactor.

The catalysed reaction is N(6)-[(R)-lipoyl]-L-lysyl-[glycine-cleavage complex H protein] + glycine + H(+) = N(6)-[(R)-S(8)-aminomethyldihydrolipoyl]-L-lysyl-[glycine-cleavage complex H protein] + CO2. Functionally, the glycine cleavage system catalyzes the degradation of glycine. The P protein binds the alpha-amino group of glycine through its pyridoxal phosphate cofactor; CO(2) is released and the remaining methylamine moiety is then transferred to the lipoamide cofactor of the H protein. The polypeptide is Glycine dehydrogenase (decarboxylating) (Prochlorococcus marinus (strain SARG / CCMP1375 / SS120)).